The primary structure comprises 208 residues: UPF0637 protein lp_2332 (208 aa).

Belongs to the UPF0637 family.

The sequence is that of UPF0637 protein lp_2332 from Lactiplantibacillus plantarum (strain ATCC BAA-793 / NCIMB 8826 / WCFS1) (Lactobacillus plantarum).